The chain runs to 770 residues: U3 small nucleolar RNA-associated protein 14 homolog A (770 aa).

Positions 1–17 are enriched in polar residues; the sequence is MNANQAAESNLLASNQQ. A disordered region spans residues 1 to 65; the sequence is MNANQAAESN…GKDRQKLADR (65 aa). A phosphoserine mark is found at S30, S32, and S53. Residues 41-68 are a coiled coil; the sequence is ERKHQKLLESISSLNGKDRQKLADRSEA. Positions 56-65 are enriched in basic and acidic residues; sequence GKDRQKLADR. S78 and S82 each carry phosphoserine. A Phosphothreonine modification is found at T206. Coiled coils occupy residues 217–291 and 318–348; these read SLEE…DKAR and LEAR…EEEG. 3 disordered regions span residues 334–361, 392–455, and 467–505; these read LTQK…LVPD, KDLE…SSQE, and LRTE…RPER. 2 stretches are compositionally biased toward acidic residues: residues 343–358 and 396–410; these read ESEE…EEPL and DPAE…ESEE. S406 and S408 each carry phosphoserine. Positions 411–444 are enriched in basic and acidic residues; sequence EKAVVEEETLLKEFEERRSLRQKSELNHMAEPVH. K449 is covalently cross-linked (Glycyl lysine isopeptide (Lys-Gly) (interchain with G-Cter in SUMO2)). At S453 the chain carries Phosphoserine. Phosphoserine is present on S567. The residue at position 588 (R588) is a Citrulline. K732 participates in a covalent cross-link: Glycyl lysine isopeptide (Lys-Gly) (interchain with G-Cter in SUMO2).

The protein belongs to the UTP14 family. Interacts with DHX37. Citrullinated by PADI4.

It localises to the nucleus. The protein localises to the nucleolus. In terms of biological role, may be required for ribosome biogenesis. The sequence is that of U3 small nucleolar RNA-associated protein 14 homolog A (UTP14A) from Bos taurus (Bovine).